The primary structure comprises 429 residues: Enolase (429 aa).

Glutamine 168 is a binding site for (2R)-2-phosphoglycerate. The active-site Proton donor is the glutamate 210. Mg(2+)-binding residues include aspartate 247, glutamate 288, and aspartate 315. Residues lysine 340, arginine 369, serine 370, and lysine 391 each coordinate (2R)-2-phosphoglycerate. The Proton acceptor role is filled by lysine 340.

It belongs to the enolase family. It depends on Mg(2+) as a cofactor.

It is found in the cytoplasm. The protein resides in the secreted. It localises to the cell surface. It carries out the reaction (2R)-2-phosphoglycerate = phosphoenolpyruvate + H2O. Its pathway is carbohydrate degradation; glycolysis; pyruvate from D-glyceraldehyde 3-phosphate: step 4/5. Catalyzes the reversible conversion of 2-phosphoglycerate (2-PG) into phosphoenolpyruvate (PEP). It is essential for the degradation of carbohydrates via glycolysis. This chain is Enolase, found in Nostoc sp. (strain PCC 7120 / SAG 25.82 / UTEX 2576).